Consider the following 122-residue polypeptide: Small ribosomal subunit protein uS13 (122 aa).

Positions 95–122 (GLPVRGQKTKTNARTRKGPKRTVANKKK) are disordered.

This sequence belongs to the universal ribosomal protein uS13 family. As to quaternary structure, part of the 30S ribosomal subunit. Forms a loose heterodimer with protein S19. Forms two bridges to the 50S subunit in the 70S ribosome.

In terms of biological role, located at the top of the head of the 30S subunit, it contacts several helices of the 16S rRNA. In the 70S ribosome it contacts the 23S rRNA (bridge B1a) and protein L5 of the 50S subunit (bridge B1b), connecting the 2 subunits; these bridges are implicated in subunit movement. Contacts the tRNAs in the A and P-sites. The polypeptide is Small ribosomal subunit protein uS13 (Agathobacter rectalis (strain ATCC 33656 / DSM 3377 / JCM 17463 / KCTC 5835 / VPI 0990) (Eubacterium rectale)).